The following is a 132-amino-acid chain: Small ribosomal subunit protein uS8 (132 aa).

Belongs to the universal ribosomal protein uS8 family. Part of the 30S ribosomal subunit. Contacts proteins S5 and S12.

One of the primary rRNA binding proteins, it binds directly to 16S rRNA central domain where it helps coordinate assembly of the platform of the 30S subunit. This is Small ribosomal subunit protein uS8 from Rhizobium johnstonii (strain DSM 114642 / LMG 32736 / 3841) (Rhizobium leguminosarum bv. viciae).